Reading from the N-terminus, the 1176-residue chain is Leucine--tRNA ligase, cytoplasmic (1176 aa).

L-leucine is bound by residues Tyr52 and Tyr54. Positions His60–His63 match the 'HIGH' region motif. Ser167 carries the phosphoserine modification. The tract at residues Gly260–Glu509 is editing domain. Residues Leu594 and Ser597 each contribute to the L-leucine site. The 'KMSKS' region signature appears at Lys716–Ser720. An ATP-binding site is contributed by Lys719. The residue at position 720 (Ser720) is a Phosphoserine. N6-acetyllysine is present on residues Lys970 and Lys1047.

The protein belongs to the class-I aminoacyl-tRNA synthetase family. In terms of assembly, part of the aminoacyl-tRNA synthetase multienzyme complex, also known as multisynthetase complex (MSC), that is composed of the aminoacyl-tRNA ligases for Arg (RARS1), Asp (DARS1), Gln (QARS1), Ile (IARS1), Leu (LARS1), Lys (KARS1), Met (MARS1) the bifunctional ligase for Glu and Pro (EPRS1) and the auxiliary subunits AIMP1/p43, AIMP2/p38 and EEF1E1/p18.

The protein resides in the cytoplasm. The catalysed reaction is tRNA(Leu) + L-leucine + ATP = L-leucyl-tRNA(Leu) + AMP + diphosphate. It catalyses the reaction L-methionyl-tRNA(Leu) + H2O = tRNA(Leu) + L-methionine + H(+). With respect to regulation, 5-fluoro-1,3-dihydro-1-hydroxy-1,2-benzoxaborole inhibits LARS1 by forming a covalent adduct with the 3' adenosine of tRNA(Leu) at the editing site, thus locking the enzyme in an inactive conformation. In terms of biological role, aminoacyl-tRNA synthetase that catalyzes the specific attachment of leucine to its cognate tRNA (tRNA(Leu)). It performs tRNA aminoacylation in a two-step reaction: Leu is initially activated by ATP to form a leucyl-adenylate (Leu-AMP) intermediate; then the leucyl moiety is transferred to the acceptor 3' end of the tRNA to yield leucyl-tRNA. To improve the fidelity of catalytic reactions, it is also able to hydrolyze misactivated aminoacyl-adenylate intermediates (pre-transfer editing) and mischarged aminoacyl-tRNAs (post-transfer editing). The polypeptide is Leucine--tRNA ligase, cytoplasmic (Homo sapiens (Human)).